We begin with the raw amino-acid sequence, 272 residues long: Pantothenate synthetase (272 aa).

Methionine 27 to histidine 34 lines the ATP pocket. The active-site Proton donor is the histidine 34. Glutamine 58 lines the (R)-pantoate pocket. Position 58 (glutamine 58) interacts with beta-alanine. Glycine 143–aspartate 146 serves as a coordination point for ATP. Residue glutamine 149 participates in (R)-pantoate binding. Residues valine 172 and leucine 180 to arginine 183 each bind ATP.

This sequence belongs to the pantothenate synthetase family. Homodimer.

It localises to the cytoplasm. The enzyme catalyses (R)-pantoate + beta-alanine + ATP = (R)-pantothenate + AMP + diphosphate + H(+). It functions in the pathway cofactor biosynthesis; (R)-pantothenate biosynthesis; (R)-pantothenate from (R)-pantoate and beta-alanine: step 1/1. Functionally, catalyzes the condensation of pantoate with beta-alanine in an ATP-dependent reaction via a pantoyl-adenylate intermediate. In Aliarcobacter butzleri (strain RM4018) (Arcobacter butzleri), this protein is Pantothenate synthetase.